Here is a 219-residue protein sequence, read N- to C-terminus: 2-hydroxy-3-keto-5-methylthiopentenyl-1-phosphate phosphatase (219 aa).

This sequence belongs to the HAD-like hydrolase superfamily. MtnX family.

It catalyses the reaction 2-hydroxy-5-methylsulfanyl-3-oxopent-1-enyl phosphate + H2O = 1,2-dihydroxy-5-(methylsulfanyl)pent-1-en-3-one + phosphate. Its pathway is amino-acid biosynthesis; L-methionine biosynthesis via salvage pathway; L-methionine from S-methyl-5-thio-alpha-D-ribose 1-phosphate: step 4/6. Dephosphorylates 2-hydroxy-3-keto-5-methylthiopentenyl-1-phosphate (HK-MTPenyl-1-P) yielding 1,2-dihydroxy-3-keto-5-methylthiopentene (DHK-MTPene). The protein is 2-hydroxy-3-keto-5-methylthiopentenyl-1-phosphate phosphatase of Bacillus cereus (strain ZK / E33L).